A 347-amino-acid polypeptide reads, in one-letter code: Protein FAM50 homolog (347 aa).

Positions 77-113 (EDIVREREKKLAQKKEEKDREKLKALEAKQAEKDRQR) are enriched in basic and acidic residues. The tract at residues 77-142 (EDIVREREKK…EDEEEPLEIK (66 aa)) is disordered. A compositionally biased stretch (acidic residues) spans 123 to 138 (PEEDEESFDDEDEEEP).

Belongs to the FAM50 family.

The polypeptide is Protein FAM50 homolog (Aedes aegypti (Yellowfever mosquito)).